Reading from the N-terminus, the 292-residue chain is Alpha-soluble NSF attachment protein (292 aa).

An N-acetylserine modification is found at serine 2. Lysine 261 is covalently cross-linked (Glycyl lysine isopeptide (Lys-Gly) (interchain with G-Cter in ubiquitin)).

This sequence belongs to the SNAP family. Binds to vacuolar cis-SNARE complexes composed of the v-SNAREs NYV1, VTI1 and YKT6, and the t-SNAREs VAM3 and VAM7. Interacts with SEC18.

The protein resides in the membrane. Its function is as follows. SNARE complex protein that binds to cis-SNARE complexes on membranes and is required for vesicular transport between the endoplasmic reticulum and the Golgi apparatus and for homotypic vacuole fusion. During the priming step of membrane fusion, is released from cis-SNARE complexes by SEC18 to establish a pool of unpaired SNAREs, which are required for interactions in trans during docking and fusion steps. Can displace HOPS from SNARE complexes, which may be a prerequisite for trans-SNARE complex disassembly and subsequent rounds of priming, docking and fusion. The chain is Alpha-soluble NSF attachment protein (SEC17) from Saccharomyces cerevisiae (strain ATCC 204508 / S288c) (Baker's yeast).